Here is a 402-residue protein sequence, read N- to C-terminus: Flavohemoprotein (402 aa).

The Globin domain maps to 1–138 (MLSPEVRALV…LADLLIGRER (138 aa)). His85 lines the heme b pocket. Catalysis depends on charge relay system residues Tyr95 and Glu137. Residues 149-402 (GGWTGWRAFK…AEVFGTGGVA (254 aa)) are reductase. Residues 152-261 (TGWRAFKVVR…SPPQGDFTLD (110 aa)) enclose the FAD-binding FR-type domain. FAD-binding positions include Tyr190 and 206 to 209 (RQYS). 274-279 (GVGLTP) serves as a coordination point for NADP(+). An FAD-binding site is contributed by 395–398 (VFGT).

The protein belongs to the globin family. Two-domain flavohemoproteins subfamily. It in the C-terminal section; belongs to the flavoprotein pyridine nucleotide cytochrome reductase family. Heme b is required as a cofactor. FAD serves as cofactor.

The enzyme catalyses 2 nitric oxide + NADPH + 2 O2 = 2 nitrate + NADP(+) + H(+). It carries out the reaction 2 nitric oxide + NADH + 2 O2 = 2 nitrate + NAD(+) + H(+). In terms of biological role, is involved in NO detoxification in an aerobic process, termed nitric oxide dioxygenase (NOD) reaction that utilizes O(2) and NAD(P)H to convert NO to nitrate, which protects the bacterium from various noxious nitrogen compounds. Therefore, plays a central role in the inducible response to nitrosative stress. This chain is Flavohemoprotein, found in Bordetella pertussis (strain Tohama I / ATCC BAA-589 / NCTC 13251).